The following is a 218-amino-acid chain: Uracil-DNA glycosylase (218 aa).

D59 functions as the Proton acceptor in the catalytic mechanism.

Belongs to the uracil-DNA glycosylase (UDG) superfamily. UNG family.

The protein localises to the cytoplasm. It catalyses the reaction Hydrolyzes single-stranded DNA or mismatched double-stranded DNA and polynucleotides, releasing free uracil.. In terms of biological role, excises uracil residues from the DNA which can arise as a result of misincorporation of dUMP residues by DNA polymerase or due to deamination of cytosine. The polypeptide is Uracil-DNA glycosylase (Staphylococcus aureus (strain bovine RF122 / ET3-1)).